The chain runs to 1018 residues: Inner centromere protein pic1 (1018 aa).

Position 171 is a phosphoserine (serine 171). 8 disordered regions span residues 184–207 (VPLR…PKQK), 247–287 (RTKD…SSSP), 306–365 (AKES…PPEI), 522–556 (TRKS…LPPS), 570–756 (EPLH…TSKP), 781–813 (EPDS…EDRK), 848–867 (TKQN…SQSN), and 877–944 (HAPA…LPSW). Composition is skewed to polar residues over residues 189–199 (TSPSPSETADS) and 268–287 (PSTT…SSSP). A compositionally biased stretch (low complexity) spans 309–320 (SLTSSTRLSTSY). Polar residues-rich tracts occupy residues 329 to 339 (VAFSSETVTSS) and 522 to 554 (TRKS…SSLP). 2 stretches are compositionally biased toward basic and acidic residues: residues 570–580 (EPLHDDSRQNS) and 624–644 (RSSE…RELS). The segment covering 645–664 (NNEFPSRQTKTVTSANSSNI) has biased composition (polar residues). Composition is skewed to basic and acidic residues over residues 665 to 679 (RDME…RSEP) and 692 to 702 (KPFEEKSEKPT). Polar residues-rich tracts occupy residues 705–719 (RLVT…SWHS) and 784–808 (SVTS…TNSQ). Over residues 890-902 (PSSKSPLLKTPKS) the composition is skewed to low complexity.

The protein belongs to the INCENP family. As to quaternary structure, component of the CPC complex at least composed of ark1, bir1 and pic1.

Its subcellular location is the nucleus. The protein resides in the cytoplasm. The protein localises to the cytoskeleton. It is found in the spindle. In terms of biological role, component of the chromosomal passenger complex (CPC), a complex that acts as a key regulator of mitosis. Has a role in sister chromatid cohesion and condensation. The sequence is that of Inner centromere protein pic1 (pic1) from Schizosaccharomyces pombe (strain 972 / ATCC 24843) (Fission yeast).